Here is an 840-residue protein sequence, read N- to C-terminus: Leucine--tRNA ligase (840 aa).

Positions 44–55 match the 'HIGH' region motif; it reads PYPSANGLHVGH. The short motif at 617 to 621 is the 'KMSKS' region element; it reads KMSKS. Residue lysine 620 participates in ATP binding.

This sequence belongs to the class-I aminoacyl-tRNA synthetase family.

Its subcellular location is the cytoplasm. It catalyses the reaction tRNA(Leu) + L-leucine + ATP = L-leucyl-tRNA(Leu) + AMP + diphosphate. This Borrelia garinii subsp. bavariensis (strain ATCC BAA-2496 / DSM 23469 / PBi) (Borreliella bavariensis) protein is Leucine--tRNA ligase.